The primary structure comprises 442 residues: Mimosinase, chloroplastic (442 aa).

The transit peptide at 1-35 (MALPSAFLNPFVPSPVTANPRTKFARVGKGFNVSC) directs the protein to the chloroplast. Residues Tyr-103, Arg-105, Gly-133, Met-134, Ser-252, and Thr-254 each contribute to the pyridoxal 5'-phosphate site. At Lys-255 the chain carries N6-(pyridoxal phosphate)lysine.

The protein belongs to the trans-sulfuration enzymes family. Forms homodimers. May form homotetramers from two homodimers. The cofactor is pyridoxal 5'-phosphate.

The protein resides in the plastid. Its subcellular location is the chloroplast. The catalysed reaction is L-mimosine + H2O = 3-hydroxy-4H-pyrid-4-one + pyruvate + NH4(+). It catalyses the reaction L,L-cystathionine + H2O = L-homocysteine + pyruvate + NH4(+). It carries out the reaction an S-substituted L-cysteine + H2O = a thiol + pyruvate + NH4(+). Catalyzes the degradation of mimosine, which is a toxic secondary metabolite found in all Mimosa and Leucaena species. Catalyzes the degradation of cystathionine, but seems to have lower preference toward cystathionine over mimosine. This chain is Mimosinase, chloroplastic, found in Mimosa pudica (Sensitive plant).